The primary structure comprises 643 residues: E3 ubiquitin-protein ligase Praja-1 (643 aa).

The tract at residues 1–363 (MGQESSKPVW…SDDYYKYCDE (363 aa)) is disordered. 3 stretches are compositionally biased toward basic and acidic residues: residues 95–105 (DYSRYPPREYR), 145–158 (KFKDDKLYDPEKGA), and 173–183 (RDVREERDKLD). The segment covering 200 to 209 (QSSVASQSSS) has biased composition (low complexity). Residues 213–227 (LATKGDSSERERREQ) show a composition bias toward basic and acidic residues. Ser265 carries the post-translational modification Phosphoserine. Thr277 is modified (phosphothreonine). Composition is skewed to basic and acidic residues over residues 289-310 (RWRDTANDNEGHSDGLARRGRG) and 320-362 (KYPE…KYCD). Residues Ser365 and Ser367 each carry the phosphoserine modification. The segment at 380 to 454 (RSREQTLSSS…REPSLQEEQA (75 aa)) is disordered. The span at 410-439 (SASTGTSPGPGASASAGAGAGASAGSNGSN) shows a compositional bias: low complexity. Residues 595 to 636 (CPICCSEYVKGEVATELPCHHYFHKPCVSIWLQKSGTCPVCR) form an RING-type zinc finger.

As to quaternary structure, binds ubiquitin-conjugating enzymes (E2s). In vitro, interacts with the ubiquitin-conjugating enzyme, UBE2D2. Substrate for E2-dependent ubiquitination. Expressed in various regions of the brain including the cerebellum, cerebral cortex, medulla, occipital pole, frontal lobe, temporal lobe and putamen. Highest levels in the cerebral cortex.

It catalyses the reaction S-ubiquitinyl-[E2 ubiquitin-conjugating enzyme]-L-cysteine + [acceptor protein]-L-lysine = [E2 ubiquitin-conjugating enzyme]-L-cysteine + N(6)-ubiquitinyl-[acceptor protein]-L-lysine.. Functionally, has E2-dependent E3 ubiquitin-protein ligase activity. Ubiquitinates MAGED1 antigen leading to its subsequent degradation by proteasome. May be involved in protein sorting. The sequence is that of E3 ubiquitin-protein ligase Praja-1 (PJA1) from Homo sapiens (Human).